A 404-amino-acid polypeptide reads, in one-letter code: Acyl-[acyl-carrier-protein] desaturase 7, chloroplastic (404 aa).

The transit peptide at methionine 1 to alanine 39 directs the protein to the chloroplast. Glutamate 138, glutamate 176, histidine 179, glutamate 229, glutamate 262, and histidine 265 together coordinate Fe cation.

It belongs to the fatty acid desaturase type 2 family. As to quaternary structure, homodimer. The cofactor is Fe(2+).

It is found in the plastid. The protein resides in the chloroplast. The protein operates within lipid metabolism; fatty acid metabolism. In terms of biological role, introduces a cis double bond in the acyl chain of an acyl-[acyl-carrier protein]. This Oryza sativa subsp. indica (Rice) protein is Acyl-[acyl-carrier-protein] desaturase 7, chloroplastic.